We begin with the raw amino-acid sequence, 202 residues long: Large ribosomal subunit protein bL25 (202 aa).

Residues 182–202 (EVEAEETEDDEAASEGEEAAE) form a disordered region. A compositionally biased stretch (acidic residues) spans 183–202 (VEAEETEDDEAASEGEEAAE).

This sequence belongs to the bacterial ribosomal protein bL25 family. CTC subfamily. As to quaternary structure, part of the 50S ribosomal subunit; part of the 5S rRNA/L5/L18/L25 subcomplex. Contacts the 5S rRNA. Binds to the 5S rRNA independently of L5 and L18.

In terms of biological role, this is one of the proteins that binds to the 5S RNA in the ribosome where it forms part of the central protuberance. The sequence is that of Large ribosomal subunit protein bL25 from Corynebacterium glutamicum (strain R).